Reading from the N-terminus, the 70-residue chain is ATP synthase subunit c (70 aa).

Helical transmembrane passes span 4–24 and 47–67; these read IAAGIAMFGAALGAGIGNGLV and FIGVGLIESMPIISFVVALMV.

The protein belongs to the ATPase C chain family. In terms of assembly, F-type ATPases have 2 components, F(1) - the catalytic core - and F(0) - the membrane proton channel. F(1) has five subunits: alpha(3), beta(3), gamma(1), delta(1), epsilon(1). F(0) has three main subunits: a(1), b(2) and c(10-14). The alpha and beta chains form an alternating ring which encloses part of the gamma chain. F(1) is attached to F(0) by a central stalk formed by the gamma and epsilon chains, while a peripheral stalk is formed by the delta and b chains.

It is found in the cell membrane. Its function is as follows. F(1)F(0) ATP synthase produces ATP from ADP in the presence of a proton or sodium gradient. F-type ATPases consist of two structural domains, F(1) containing the extramembraneous catalytic core and F(0) containing the membrane proton channel, linked together by a central stalk and a peripheral stalk. During catalysis, ATP synthesis in the catalytic domain of F(1) is coupled via a rotary mechanism of the central stalk subunits to proton translocation. Key component of the F(0) channel; it plays a direct role in translocation across the membrane. A homomeric c-ring of between 10-14 subunits forms the central stalk rotor element with the F(1) delta and epsilon subunits. This Lactiplantibacillus plantarum (strain ATCC BAA-793 / NCIMB 8826 / WCFS1) (Lactobacillus plantarum) protein is ATP synthase subunit c.